The sequence spans 352 residues: Peptide chain release factor 1 (352 aa).

Q233 is subject to N5-methylglutamine. A disordered region spans residues 288 to 309 (NAKDRKEQVGSGDRSERIRTYN). The segment covering 289-306 (AKDRKEQVGSGDRSERIR) has biased composition (basic and acidic residues).

Belongs to the prokaryotic/mitochondrial release factor family. Methylated by PrmC. Methylation increases the termination efficiency of RF1.

The protein resides in the cytoplasm. In terms of biological role, peptide chain release factor 1 directs the termination of translation in response to the peptide chain termination codons UAG and UAA. This chain is Peptide chain release factor 1 (prfA), found in Helicobacter pylori (strain ATCC 700392 / 26695) (Campylobacter pylori).